The primary structure comprises 602 residues: CDPK-related protein kinase (602 aa).

A disordered region spans residues 1-59 (MGICVSKPSPEPDLHNHHTSIPVNDTSLPPQDNSIPPKDIAIPAQDNNKPPGKKSPFLP). The segment covering 19-34 (TSIPVNDTSLPPQDNS) has biased composition (polar residues). 3 consecutive repeat copies span residues 20-26 (SIPVNDT), 27-33 (SLPPQDN), and 34-40 (SIPPKDI). Positions 20–40 (SIPVNDTSLPPQDNSIPPKDI) are 3 X 7 AA tandem repeats of S-[LI]-P-X-X-D-X. A Protein kinase domain is found at 148 to 410 (FEVGEEVGRG…AAQALCHSWI (263 aa)). Residues 154–162 (VGRGHFGYT) and lysine 180 each bind ATP. The active-site Proton acceptor is the aspartate 276. 4 EF-hand domains span residues 451–486 (VDEL…RNST), 487–527 (DAMK…LEAL), 528–563 (DRWE…LGPS), and 564–602 (IPVH…AKAQ).

It belongs to the protein kinase superfamily. CAMK Ser/Thr protein kinase family. CaMK subfamily.

The catalysed reaction is L-seryl-[protein] + ATP = O-phospho-L-seryl-[protein] + ADP + H(+). It catalyses the reaction L-threonyl-[protein] + ATP = O-phospho-L-threonyl-[protein] + ADP + H(+). This chain is CDPK-related protein kinase (CRK), found in Daucus carota (Wild carrot).